A 134-amino-acid polypeptide reads, in one-letter code: Cytochrome b5 (134 aa).

A2 is modified (N-acetylalanine). N6-acetyllysine is present on residues K7, K10, and K19. The Cytochrome b5 heme-binding domain maps to 9 to 85; it reads VKYYTLEEIQ…SKTFIIGELH (77 aa). Residues H44 and H68 each contribute to the heme site. Residues 109-131 traverse the membrane as a helical segment; it reads WWTNWVIPAISALVVSLMYHFYT.

It belongs to the cytochrome b5 family.

It is found in the endoplasmic reticulum membrane. It localises to the microsome membrane. The protein resides in the cytoplasm. Its function is as follows. Cytochrome b5 is a membrane-bound hemoprotein functioning as an electron carrier for several membrane-bound oxygenases. The protein is Cytochrome b5 (CYB5A) of Sus scrofa (Pig).